The chain runs to 74 residues: Kappa-scoloptoxin(07)-Ssm2d (74 aa).

The first 19 residues, 1-19, serve as a signal peptide directing secretion; that stretch reads MLVFYALLFVTVFSNTVMG. The propeptide occupies 20–41; sequence ATIDKPIPKPILREAIEEIEVN.

Belongs to the scoloptoxin-07 family. Contains 3 disulfide bonds. In terms of tissue distribution, expressed by the venom gland.

It is found in the secreted. In terms of biological role, inhibits voltage-gated potassium channels. The polypeptide is Kappa-scoloptoxin(07)-Ssm2d (Scolopendra mutilans (Chinese red-headed centipede)).